The sequence spans 824 residues: Disintegrin and metalloproteinase domain-containing protein 17 (824 aa).

The first 17 residues, 1–17 (MRQSLLFLTSVVPFVLA), serve as a signal peptide directing secretion. The propeptide occupies 18–214 (PRPPDDPGFG…PEELVHRVKR (197 aa)). Asn103, Asn157, and Asn174 each carry an N-linked (GlcNAc...) asparagine glycan. The Cysteine switch signature appears at 182–189 (KVCGYLKV). Cys184 provides a ligand contact to Zn(2+). Over 215–671 (RADPDPMKNT…NTFGKFLADN (457 aa)) the chain is Extracellular. In terms of domain architecture, Peptidase M12B spans 223-474 (NTCKLLVVAD…KAQECFQERS (252 aa)). 3 disulfide bridges follow: Cys225–Cys333, Cys365–Cys469, and Cys423–Cys453. N-linked (GlcNAc...) asparagine glycosylation is present at Asn264. His405 provides a ligand contact to Zn(2+). Residue Glu406 is part of the active site. The Zn(2+) site is built by His409 and His415. 4 N-linked (GlcNAc...) asparagine glycosylation sites follow: Asn452, Asn498, Asn539, and Asn551. The Disintegrin domain occupies 475–563 (NKVCGNSRVD…ECPPPGNAED (89 aa)). 4 disulfide bridges follow: Cys534/Cys555, Cys573/Cys582, Cys578/Cys591, and Cys593/Cys600. Asn594 is a glycosylation site (N-linked (GlcNAc...) asparagine). The interval 603–671 (CCRDLSGRCV…NTFGKFLADN (69 aa)) is crambin-like. The helical transmembrane segment at 672 to 692 (IVGSVLVFSLIFWIPFSILVH) threads the bilayer. Over 693–824 (CVDKKLDKQY…NRVDSKETEC (132 aa)) the chain is Cytoplasmic. 2 short sequence motifs (SH3-binding) span residues 731 to 738 (PAPQTPGR) and 741 to 748 (PAPVIPSA). Residues 732-824 (APQTPGRLQP…NRVDSKETEC (93 aa)) form a disordered region. Residue Thr735 is modified to Phosphothreonine; by MAPK14. Positions 741 to 752 (PAPVIPSAPAAP) are enriched in low complexity. Position 761 is a phosphothreonine (Thr761). Phosphoserine is present on Ser767. 3 stretches are compositionally biased toward basic and acidic residues: residues 768–781 (TDSHMDEDGFEKDP), 791–807 (SFEDLTDHPVTRSEKAA), and 815–824 (NRVDSKETEC). 2 positions are modified to phosphoserine: Ser791 and Ser819.

Interacts with MAD2L1, MAPK14 and MUC1. Interacts with iRhom1/RHBDF1 and iRhom2/RHBDF2. Interacts with FRMD8 via its interaction with iRhom1/RHBDF1 and iRhom2/RHBDF2. Interacts with TSPAN8. It depends on Zn(2+) as a cofactor. The precursor is cleaved by a furin endopeptidase. Post-translationally, phosphorylated. Stimulation by growth factor or phorbol 12-myristate 13-acetate induces phosphorylation of Ser-819 but decreases phosphorylation of Ser-791. Phosphorylation at Thr-735 by MAPK14 is required for ADAM17-mediated ectodomain shedding. As to expression, ubiquitously expressed. Expressed at highest levels in adult heart, placenta, skeletal muscle, pancreas, spleen, thymus, prostate, testes, ovary and small intestine, and in fetal brain, lung, liver and kidney. Expressed in natural killer cells (at protein level).

It is found in the cell membrane. The enzyme catalyses Narrow endopeptidase specificity. Cleaves Pro-Leu-Ala-Gln-Ala-|-Val-Arg-Ser-Ser-Ser in the membrane-bound, 26-kDa form of tumor necrosis factor alpha (TNFalpha). Similarly cleaves other membrane-anchored, cell-surface proteins to 'shed' the extracellular domains.. Its function is as follows. Transmembrane metalloprotease which mediates the ectodomain shedding of a myriad of transmembrane proteins including adhesion proteins, growth factor precursors and cytokines important for inflammation and immunity. Cleaves the membrane-bound precursor of TNF-alpha to its mature soluble form. Responsible for the proteolytical release of soluble JAM3 from endothelial cells surface. Responsible for the proteolytic release of several other cell-surface proteins, including p75 TNF-receptor, interleukin 1 receptor type II, p55 TNF-receptor, transforming growth factor-alpha, L-selectin, growth hormone receptor, MUC1 and the amyloid precursor protein. Acts as an activator of Notch pathway by mediating cleavage of Notch, generating the membrane-associated intermediate fragment called Notch extracellular truncation (NEXT). Plays a role in the proteolytic processing of ACE2. Plays a role in hemostasis through shedding of GP1BA, the platelet glycoprotein Ib alpha chain. Mediates the proteolytic cleavage of LAG3, leading to release the secreted form of LAG3. Mediates the proteolytic cleavage of IL6R, leading to the release of secreted form of IL6R. Mediates the proteolytic cleavage and shedding of FCGR3A upon NK cell stimulation, a mechanism that allows for increased NK cell motility and detachment from opsonized target cells. Cleaves TREM2, resulting in shedding of the TREM2 ectodomain. In Homo sapiens (Human), this protein is Disintegrin and metalloproteinase domain-containing protein 17.